A 209-amino-acid chain; its full sequence is Holliday junction branch migration complex subunit RuvA (209 aa).

A domain I region spans residues 1–64 (MIGRIRGMLI…EDAQSLYGFA (64 aa)). Residues 65–143 (SRLDRNLFRL…QLEGQFVPSQ (79 aa)) form a domain II region. The segment at 144–157 (PDVPTGAGAATASQ) is flexible linker. A domain III region spans residues 158–209 (AGPDPREEAEAALIALGYKPQEAAKAISKVAGPDMNSETLIRLALKNMIPAG).

The protein belongs to the RuvA family. In terms of assembly, homotetramer. Forms an RuvA(8)-RuvB(12)-Holliday junction (HJ) complex. HJ DNA is sandwiched between 2 RuvA tetramers; dsDNA enters through RuvA and exits via RuvB. An RuvB hexamer assembles on each DNA strand where it exits the tetramer. Each RuvB hexamer is contacted by two RuvA subunits (via domain III) on 2 adjacent RuvB subunits; this complex drives branch migration. In the full resolvosome a probable DNA-RuvA(4)-RuvB(12)-RuvC(2) complex forms which resolves the HJ.

The protein localises to the cytoplasm. The RuvA-RuvB-RuvC complex processes Holliday junction (HJ) DNA during genetic recombination and DNA repair, while the RuvA-RuvB complex plays an important role in the rescue of blocked DNA replication forks via replication fork reversal (RFR). RuvA specifically binds to HJ cruciform DNA, conferring on it an open structure. The RuvB hexamer acts as an ATP-dependent pump, pulling dsDNA into and through the RuvAB complex. HJ branch migration allows RuvC to scan DNA until it finds its consensus sequence, where it cleaves and resolves the cruciform DNA. In Marinobacter nauticus (strain ATCC 700491 / DSM 11845 / VT8) (Marinobacter aquaeolei), this protein is Holliday junction branch migration complex subunit RuvA.